A 322-amino-acid polypeptide reads, in one-letter code: UDP-N-acetylenolpyruvoylglucosamine reductase (322 aa).

One can recognise an FAD-binding PCMH-type domain in the interval 36 to 202 (RAGGPAQVLF…TSVLFEGVPG (167 aa)). Arginine 182 is an active-site residue. Serine 231 (proton donor) is an active-site residue. The active site involves glutamate 301.

This sequence belongs to the MurB family. The cofactor is FAD.

The protein localises to the cytoplasm. The enzyme catalyses UDP-N-acetyl-alpha-D-muramate + NADP(+) = UDP-N-acetyl-3-O-(1-carboxyvinyl)-alpha-D-glucosamine + NADPH + H(+). The protein operates within cell wall biogenesis; peptidoglycan biosynthesis. Its function is as follows. Cell wall formation. The protein is UDP-N-acetylenolpyruvoylglucosamine reductase of Brucella suis biovar 1 (strain 1330).